The primary structure comprises 737 residues: Oligopeptide transporter 3 (737 aa).

Helical transmembrane passes span 45-65 (AWFL…FFTY), 69-89 (PLTI…KFMA), 117-137 (VIIT…AYSI), 153-173 (FICG…WAGI), 215-235 (FLVA…LFPI), 255-275 (VGSG…AGIS), 289-309 (ILNV…VCYW), 357-377 (LYLS…FTAT), 418-438 (WWFY…SFVW), 446-466 (WWGM…IGVI), 478-498 (IIGQ…NLIF), 532-552 (AQLV…WWML), 604-624 (VWLF…SKIF), 629-649 (WIPL…PPAT), 650-670 (PTNI…VFNY), and 681-701 (VLSA…FFAL).

It belongs to the oligopeptide OPT transporter (TC 2.A.67.1) family. Strong expression in flowers, leaves and roots. Preferentially expressed in the vascular tissues of seedlings and mature plants as well as in pollen and developing embryos.

The protein resides in the membrane. In terms of biological role, may be involved in the translocation of tetra- and pentapeptides across the cellular membrane in an energy-dependent manner. Also acts as a metal transporter that could be a component of the copper transport machinery. Essential for early embryo development. The chain is Oligopeptide transporter 3 (OPT3) from Arabidopsis thaliana (Mouse-ear cress).